Consider the following 612-residue polypeptide: Dihydroxy-acid dehydratase (612 aa).

Asp-81 contributes to the Mg(2+) binding site. Cys-122 provides a ligand contact to [2Fe-2S] cluster. Asp-123 and Lys-124 together coordinate Mg(2+). Lys-124 is subject to N6-carboxylysine. A [2Fe-2S] cluster-binding site is contributed by Cys-195. Glu-491 provides a ligand contact to Mg(2+). The active-site Proton acceptor is Ser-517.

It belongs to the IlvD/Edd family. In terms of assembly, homodimer. [2Fe-2S] cluster serves as cofactor. Mg(2+) is required as a cofactor.

It carries out the reaction (2R)-2,3-dihydroxy-3-methylbutanoate = 3-methyl-2-oxobutanoate + H2O. The enzyme catalyses (2R,3R)-2,3-dihydroxy-3-methylpentanoate = (S)-3-methyl-2-oxopentanoate + H2O. It participates in amino-acid biosynthesis; L-isoleucine biosynthesis; L-isoleucine from 2-oxobutanoate: step 3/4. It functions in the pathway amino-acid biosynthesis; L-valine biosynthesis; L-valine from pyruvate: step 3/4. Functions in the biosynthesis of branched-chain amino acids. Catalyzes the dehydration of (2R,3R)-2,3-dihydroxy-3-methylpentanoate (2,3-dihydroxy-3-methylvalerate) into 2-oxo-3-methylpentanoate (2-oxo-3-methylvalerate) and of (2R)-2,3-dihydroxy-3-methylbutanoate (2,3-dihydroxyisovalerate) into 2-oxo-3-methylbutanoate (2-oxoisovalerate), the penultimate precursor to L-isoleucine and L-valine, respectively. This is Dihydroxy-acid dehydratase from Rhizobium etli (strain ATCC 51251 / DSM 11541 / JCM 21823 / NBRC 15573 / CFN 42).